A 521-amino-acid polypeptide reads, in one-letter code: Medium/long-chain-fatty-acid--[acyl-carrier-protein] ligase MbtM (521 aa).

Positions arginine 146–lysine 172 are disordered.

It belongs to the ATP-dependent AMP-binding enzyme family.

The enzyme catalyses a long-chain fatty acid + holo-[ACP] + ATP = a long-chain fatty acyl-[ACP] + AMP + diphosphate. It carries out the reaction a medium-chain fatty acid + holo-[ACP] + ATP = a medium-chain fatty acyl-[ACP] + AMP + diphosphate. The protein operates within siderophore biosynthesis; mycobactin biosynthesis. Functionally, activates lipidic moieties required for mycobactin biosynthesis. Converts medium- to long-chain aliphatic fatty acids into acyl adenylate, which is further transferred on to the phosphopantetheine arm of the carrier protein MbtL. The polypeptide is Medium/long-chain-fatty-acid--[acyl-carrier-protein] ligase MbtM (mbtM) (Mycolicibacterium paratuberculosis (strain ATCC BAA-968 / K-10) (Mycobacterium paratuberculosis)).